Consider the following 368-residue polypeptide: p21-activated protein kinase-interacting protein 1-like (368 aa).

5 WD repeats span residues 45-82 (AHTA…EHGA), 85-123 (HHDG…CLKT), 126-165 (AHKG…SAFI), 207-245 (AFTK…CVCE), and 248-289 (AHEN…IESP).

The protein localises to the nucleus. The protein resides in the nucleolus. Negatively regulates the PAK1 kinase. PAK1 is a member of the PAK kinase family, which has been shown to play a positive role in the regulation of signaling pathways involving MAPK8 and RELA. PAK1 exists as an inactive homodimer, which is activated by binding of small GTPases such as CDC42 to an N-terminal regulatory domain. PAK1IP1 also binds to the N-terminus of PAK1, and inhibits the specific activation of PAK1 by CDC42. May be involved in ribosomal large subunit assembly. This is p21-activated protein kinase-interacting protein 1-like (pak1ip1) from Danio rerio (Zebrafish).